We begin with the raw amino-acid sequence, 245 residues long: tRNA pseudouridine synthase A (245 aa).

D52 serves as the catalytic Nucleophile. Y111 contacts substrate.

This sequence belongs to the tRNA pseudouridine synthase TruA family. Homodimer.

The catalysed reaction is uridine(38/39/40) in tRNA = pseudouridine(38/39/40) in tRNA. Formation of pseudouridine at positions 38, 39 and 40 in the anticodon stem and loop of transfer RNAs. The chain is tRNA pseudouridine synthase A from Thermotoga maritima (strain ATCC 43589 / DSM 3109 / JCM 10099 / NBRC 100826 / MSB8).